Here is a 483-residue protein sequence, read N- to C-terminus: Regulatory protein ViaA (483 aa).

It belongs to the ViaA family. As to quaternary structure, homodimer. Interacts with RavA.

It localises to the cytoplasm. Component of the RavA-ViaA chaperone complex, which may act on the membrane to optimize the function of some of the respiratory chains. ViaA stimulates the ATPase activity of RavA. This is Regulatory protein ViaA from Shigella dysenteriae serotype 1 (strain Sd197).